The primary structure comprises 1604 residues: Transposon Ty1-DR4 Gag-Pol polyprotein (1604 aa).

Composition is skewed to polar residues over residues 1 to 23, 48 to 60, and 127 to 152; these read MESQQLSQHSPISHGSACASVTS, TKANSQQTTTPAS, and QSQFPQYPSSVGTPLSTPSPESGNTF. Disordered regions lie at residues 1 to 93, 126 to 174, and 352 to 421; these read MESQ…MMTQ, PQSQ…PPPM, and GSRN…SKST. Positions 153–165 are enriched in low complexity; the sequence is TDSSSADSDMTST. The tract at residues 299 to 401 is RNA-binding; the sequence is NNGIHINNKV…NSKSKTARAH (103 aa). The segment covering 402 to 418 has biased composition (low complexity); it reads NVSTSNNSPSTDNDSIS. S416 is subject to Phosphoserine. D461 serves as the catalytic For protease activity; shared with dimeric partner. The interval 583–640 is integrase-type zinc finger-like; it reads NVHTSESTRKYPYPFIHRMLAHANAQTIRYSLKNNTITYFNESDVDWSSAIDYQCPDC. In terms of domain architecture, Integrase catalytic spans 660–835; the sequence is NSYEPFQYLH…AGLDISTLLP (176 aa). Mg(2+) is bound by residues D671 and D736. Disordered regions lie at residues 956-1087, 1092-1111, and 1130-1187; these read SKAV…ETEK, RSPSIDASPPENNSSHNIVP, and DLPL…DNET. A compositionally biased stretch (low complexity) spans 960–969; sequence SPTDSTPPST. A compositionally biased stretch (polar residues) spans 1005-1015; sequence STPQISNIEST. A compositionally biased stretch (basic and acidic residues) spans 1038–1053; sequence ESSHASKSKDFRHSDS. Composition is skewed to polar residues over residues 1054–1082 and 1101–1111; these read YSENETNHTNVPISSTGGTNNKTVPQISD and PENNSSHNIVP. The Bipartite nuclear localization signal signature appears at 1178–1212; that stretch reads KKRSLEDNETEIKVSRDTWNTKNMRSLEPPRSKKR. The Reverse transcriptase Ty1/copia-type domain maps to 1338-1476; the sequence is NNYYITQLDI…DILGLEIKYQ (139 aa). Mg(2+) is bound by residues D1346, D1427, and D1428.

In terms of assembly, the capsid protein forms a homotrimer, from which the VLPs are assembled. The protease is a homodimer, whose active site consists of two apposed aspartic acid residues. In terms of processing, initially, virus-like particles (VLPs) are composed of the structural unprocessed proteins Gag and Gag-Pol, and also contain the host initiator methionine tRNA (tRNA(i)-Met) which serves as a primer for minus-strand DNA synthesis, and a dimer of genomic Ty RNA. Processing of the polyproteins occurs within the particle and proceeds by an ordered pathway, called maturation. First, the protease (PR) is released by autocatalytic cleavage of the Gag-Pol polyprotein yielding capsid protein p45 and a Pol-p154 precursor protein. This cleavage is a prerequisite for subsequent processing of Pol-p154 at the remaining sites to release the mature structural and catalytic proteins. Maturation takes place prior to the RT reaction and is required to produce transposition-competent VLPs.

The protein localises to the cytoplasm. Its subcellular location is the nucleus. The catalysed reaction is DNA(n) + a 2'-deoxyribonucleoside 5'-triphosphate = DNA(n+1) + diphosphate. It carries out the reaction Endonucleolytic cleavage to 5'-phosphomonoester.. Capsid protein (CA) is the structural component of the virus-like particle (VLP), forming the shell that encapsulates the retrotransposons dimeric RNA genome. The particles are assembled from trimer-clustered units and there are holes in the capsid shells that allow for the diffusion of macromolecules. CA also has nucleocapsid-like chaperone activity, promoting primer tRNA(i)-Met annealing to the multipartite primer-binding site (PBS), dimerization of Ty1 RNA and initiation of reverse transcription. Its function is as follows. The aspartyl protease (PR) mediates the proteolytic cleavages of the Gag and Gag-Pol polyproteins after assembly of the VLP. Functionally, reverse transcriptase/ribonuclease H (RT) is a multifunctional enzyme that catalyzes the conversion of the retro-elements RNA genome into dsDNA within the VLP. The enzyme displays a DNA polymerase activity that can copy either DNA or RNA templates, and a ribonuclease H (RNase H) activity that cleaves the RNA strand of RNA-DNA heteroduplexes during plus-strand synthesis and hydrolyzes RNA primers. The conversion leads to a linear dsDNA copy of the retrotransposon that includes long terminal repeats (LTRs) at both ends. In terms of biological role, integrase (IN) targets the VLP to the nucleus, where a subparticle preintegration complex (PIC) containing at least integrase and the newly synthesized dsDNA copy of the retrotransposon must transit the nuclear membrane. Once in the nucleus, integrase performs the integration of the dsDNA into the host genome. The polypeptide is Transposon Ty1-DR4 Gag-Pol polyprotein (TY1B-DR4) (Saccharomyces cerevisiae (strain ATCC 204508 / S288c) (Baker's yeast)).